The sequence spans 234 residues: Structural PPIase-like protein L605 (234 aa).

The PPIase cyclophilin-type domain maps to 18–205 (YMDIVLNNEI…PTFSIGKCGA (188 aa)).

The protein belongs to the cyclophilin-type PPIase family. As to quaternary structure, homotrimer.

Its subcellular location is the virion. The protein localises to the host cytoplasm. The protein is Structural PPIase-like protein L605 of Acanthamoeba polyphaga mimivirus (APMV).